The sequence spans 437 residues: Enolase (437 aa).

Glutamine 162 is a binding site for (2R)-2-phosphoglycerate. Catalysis depends on glutamate 204, which acts as the Proton donor. Aspartate 251, glutamate 297, and aspartate 324 together coordinate Mg(2+). Residues lysine 349, arginine 378, serine 379, and lysine 400 each contribute to the (2R)-2-phosphoglycerate site. The active-site Proton acceptor is lysine 349.

This sequence belongs to the enolase family. Mg(2+) serves as cofactor.

The protein resides in the cytoplasm. It localises to the secreted. It is found in the cell surface. The enzyme catalyses (2R)-2-phosphoglycerate = phosphoenolpyruvate + H2O. The protein operates within carbohydrate degradation; glycolysis; pyruvate from D-glyceraldehyde 3-phosphate: step 4/5. Functionally, catalyzes the reversible conversion of 2-phosphoglycerate (2-PG) into phosphoenolpyruvate (PEP). It is essential for the degradation of carbohydrates via glycolysis. The protein is Enolase of Chlorobium chlorochromatii (strain CaD3).